The sequence spans 49 residues: Large ribosomal subunit protein bL33B (49 aa).

It belongs to the bacterial ribosomal protein bL33 family.

This Bacillus anthracis protein is Large ribosomal subunit protein bL33B.